Here is a 264-residue protein sequence, read N- to C-terminus: Small ribosomal subunit protein uS3 (264 aa).

Residues V39–R107 enclose the KH type-2 domain. The segment at N211–E264 is disordered. Positions D221–G239 are enriched in basic and acidic residues. A compositionally biased stretch (gly residues) spans R240 to A251.

The protein belongs to the universal ribosomal protein uS3 family. In terms of assembly, part of the 30S ribosomal subunit. Forms a tight complex with proteins S10 and S14.

Its function is as follows. Binds the lower part of the 30S subunit head. Binds mRNA in the 70S ribosome, positioning it for translation. The chain is Small ribosomal subunit protein uS3 from Cupriavidus pinatubonensis (strain JMP 134 / LMG 1197) (Cupriavidus necator (strain JMP 134)).